The chain runs to 156 residues: Transcription elongation factor GreA (156 aa).

The stretch at 46-67 (AEYHAAREKQSFIEGRIKELEA) forms a coiled coil.

Belongs to the GreA/GreB family.

In terms of biological role, necessary for efficient RNA polymerase transcription elongation past template-encoded arresting sites. The arresting sites in DNA have the property of trapping a certain fraction of elongating RNA polymerases that pass through, resulting in locked ternary complexes. Cleavage of the nascent transcript by cleavage factors such as GreA or GreB allows the resumption of elongation from the new 3'terminus. GreA releases sequences of 2 to 3 nucleotides. The polypeptide is Transcription elongation factor GreA (Cereibacter sphaeroides (strain ATCC 17029 / ATH 2.4.9) (Rhodobacter sphaeroides)).